The following is a 92-amino-acid chain: Small ribosomal subunit protein uS19c (92 aa).

It belongs to the universal ribosomal protein uS19 family.

Its subcellular location is the plastid. Its function is as follows. Protein S19 forms a complex with S13 that binds strongly to the 16S ribosomal RNA. In Aneura mirabilis (Parasitic liverwort), this protein is Small ribosomal subunit protein uS19c.